A 472-amino-acid polypeptide reads, in one-letter code: Diaminopimelate decarboxylase (472 aa).

The tract at residues 1–23 is disordered; it reads MNVHTAGPRHAEKTRHTATPQRV. N6-(pyridoxal phosphate)lysine is present on Lys-97. Residues Gly-283 and 325 to 328 each bind pyridoxal 5'-phosphate; that span reads EPGR. Arg-328, Arg-369, and Tyr-373 together coordinate substrate. Catalysis depends on Cys-400, which acts as the Proton donor. Substrate contacts are provided by Glu-401 and Tyr-430. Tyr-430 contacts pyridoxal 5'-phosphate.

This sequence belongs to the Orn/Lys/Arg decarboxylase class-II family. LysA subfamily. Homodimer. Requires pyridoxal 5'-phosphate as cofactor.

The catalysed reaction is meso-2,6-diaminopimelate + H(+) = L-lysine + CO2. It functions in the pathway amino-acid biosynthesis; L-lysine biosynthesis via DAP pathway; L-lysine from DL-2,6-diaminopimelate: step 1/1. Its function is as follows. Specifically catalyzes the decarboxylation of meso-diaminopimelate (meso-DAP) to L-lysine. The sequence is that of Diaminopimelate decarboxylase from Mycobacterium leprae (strain TN).